Consider the following 501-residue polypeptide: Bifunctional purine biosynthesis protein PurH (501 aa).

One can recognise an MGS-like domain in the interval 1–144; the sequence is MKKRALISVF…KNFKDVVVLS (144 aa).

It belongs to the PurH family.

It catalyses the reaction (6R)-10-formyltetrahydrofolate + 5-amino-1-(5-phospho-beta-D-ribosyl)imidazole-4-carboxamide = 5-formamido-1-(5-phospho-D-ribosyl)imidazole-4-carboxamide + (6S)-5,6,7,8-tetrahydrofolate. The enzyme catalyses IMP + H2O = 5-formamido-1-(5-phospho-D-ribosyl)imidazole-4-carboxamide. Its pathway is purine metabolism; IMP biosynthesis via de novo pathway; 5-formamido-1-(5-phospho-D-ribosyl)imidazole-4-carboxamide from 5-amino-1-(5-phospho-D-ribosyl)imidazole-4-carboxamide (10-formyl THF route): step 1/1. It participates in purine metabolism; IMP biosynthesis via de novo pathway; IMP from 5-formamido-1-(5-phospho-D-ribosyl)imidazole-4-carboxamide: step 1/1. The chain is Bifunctional purine biosynthesis protein PurH from Clostridium perfringens (strain 13 / Type A).